The chain runs to 168 residues: 6,7-dimethyl-8-ribityllumazine synthase (168 aa).

5-amino-6-(D-ribitylamino)uracil is bound by residues F24, 58–60 (ALE), and 82–84 (AVI). Position 87–88 (87–88 (ET)) interacts with (2S)-2-hydroxy-3-oxobutyl phosphate. The active-site Proton donor is H90. Position 115 (N115) interacts with 5-amino-6-(D-ribitylamino)uracil. Residue R129 participates in (2S)-2-hydroxy-3-oxobutyl phosphate binding.

Belongs to the DMRL synthase family.

The catalysed reaction is (2S)-2-hydroxy-3-oxobutyl phosphate + 5-amino-6-(D-ribitylamino)uracil = 6,7-dimethyl-8-(1-D-ribityl)lumazine + phosphate + 2 H2O + H(+). It participates in cofactor biosynthesis; riboflavin biosynthesis; riboflavin from 2-hydroxy-3-oxobutyl phosphate and 5-amino-6-(D-ribitylamino)uracil: step 1/2. Functionally, catalyzes the formation of 6,7-dimethyl-8-ribityllumazine by condensation of 5-amino-6-(D-ribitylamino)uracil with 3,4-dihydroxy-2-butanone 4-phosphate. This is the penultimate step in the biosynthesis of riboflavin. The polypeptide is 6,7-dimethyl-8-ribityllumazine synthase (Paraburkholderia xenovorans (strain LB400)).